A 309-amino-acid polypeptide reads, in one-letter code: Carbonic anhydrase 4 (309 aa).

An N-terminal signal peptide occupies residues 1–17 (MQLLLALLALAYVAPST). One can recognise an Alpha-carbonic anhydrase domain in the interval 20–282 (SHWCYEIQAK…LGNRQVFRSH (263 aa)). Cystine bridges form between C23–C35 and C45–C226. The active-site Proton donor/acceptor is the H87. Zn(2+)-binding residues include H114, H116, and H139. N193 carries N-linked (GlcNAc...) asparagine glycosylation. 222–223 (TT) serves as a coordination point for substrate. S281 carries GPI-anchor amidated serine lipidation. Positions 282–309 (HASGRLLSLPLPTLLVPTLTCLVASFLH) are cleaved as a propeptide — removed in mature form.

It belongs to the alpha-carbonic anhydrase family. Interacts with SLC4A4. Requires Zn(2+) as cofactor. Post-translationally, the N-terminus is blocked. Glycosylated. Present in kidney and lung. Also particularly abundant in brain, muscle, heart and liver. Not detected in skin or spleen.

It localises to the cell membrane. It catalyses the reaction hydrogencarbonate + H(+) = CO2 + H2O. Its activity is regulated as follows. Inhibited by acetazolamide. In terms of biological role, catalyzes the reversible hydration of carbon dioxide into bicarbonate and protons and thus is essential to maintaining intracellular and extracellular pH. May stimulate the sodium/bicarbonate transporter activity of SLC4A4 that acts in pH homeostasis. It is essential for acid overload removal from the retina and retina epithelium, and acid release in the choriocapillaris in the choroid. In Rattus norvegicus (Rat), this protein is Carbonic anhydrase 4 (Ca4).